Consider the following 718-residue polypeptide: Protein Hook homolog 1 (718 aa).

Residues 8–124 (PLLCDSLILW…RLMQLILGCA (117 aa)) form the Calponin-homology (CH) domain. 2 coiled-coil regions span residues 164 to 428 (SASD…ELRY) and 473 to 652 (LLLQ…AKLR).

It belongs to the hook family. In terms of assembly, interacts with microtubules.

Its subcellular location is the cytoplasm. The protein resides in the cytoskeleton. In terms of biological role, may function to promote vesicle trafficking and/or fusion. This chain is Protein Hook homolog 1 (HOOK1), found in Gallus gallus (Chicken).